A 612-amino-acid chain; its full sequence is E3 ubiquitin-protein ligase synoviolin (612 aa).

Over 1–4 the chain is Cytoplasmic; it reads MFRT. The tract at residues 1-251 is involved in FAM8A1 interaction; that stretch reads MFRTAVMMAA…LFAIRPMYLA (251 aa). A helical transmembrane segment spans residues 5–25; that stretch reads AVMMAASLALTGAVVAHAYYL. The segment at 21–42 is interaction with SEL1L; it reads HAYYLKHQFYPTVVYLTKSSPS. Residues 26–41 lie on the Lumenal side of the membrane; that stretch reads KHQFYPTVVYLTKSSP. Residues 42-62 traverse the membrane as a helical segment; that stretch reads SMAVLYIQAFVLVFLLGKVMG. Over 63 to 98 the chain is Cytoplasmic; that stretch reads KVFFGQLRAAEMEHLLERSWYAVTETCLAFTVFRDD. A helical membrane pass occupies residues 99–119; the sequence is FSPRFVALFTLLLFLKCFHWL. At 120–140 the chain is on the lumenal side; the sequence is AEDRVDFMERSPNISWLFHCR. A helical membrane pass occupies residues 141 to 161; it reads IVSLMFLLGILDFLFVSHAYH. Residues 162–169 are Cytoplasmic-facing; sequence SILTRGAS. The helical transmembrane segment at 170 to 190 threads the bilayer; it reads VQLVFGFEYAILMTMVLTIFI. The Lumenal segment spans residues 191–224; the sequence is KYVLHSVDLQSENPWDNKAVYMLYTELFTGFIKV. Residues 225 to 245 traverse the membrane as a helical segment; that stretch reads LLYMAFMTIMIKVHTFPLFAI. The interaction with p53/TP53 stretch occupies residues 236 to 270; sequence KVHTFPLFAIRPMYLAMRQFKKAVTDAIMSRRAIR. At 246–612 the chain is on the cytoplasmic side; the sequence is RPMYLAMRQF…LQKLESPVAH (367 aa). The Zn(2+) site is built by Cys-291, Cys-294, Cys-307, His-309, His-312, Cys-315, Cys-326, and Cys-329. Residues 291–330 form an RING-type; atypical zinc finger; it reads CIICREEMVTGAKRLPCNHIFHTSCLRSWFQRQQTCPTCR. 2 disordered regions span residues 337-375 and 393-449; these read SLPA…GLLP and PVPP…PGFP. 2 stretches are compositionally biased toward pro residues: residues 341-375 and 393-409; these read QSPP…GLLP and PVPP…PPPT. Over residues 416–434 the composition is skewed to low complexity; it reads PSGAATTTAAGTSTSAPAP. The span at 435–449 shows a compositional bias: pro residues; that stretch reads GSVPGPEAGPAPGFP. The segment at 474–529 is HAF-H domain; necessary to form higher-order Hrd1 complexes; the sequence is GFAGLTPEELRALEGHERQHLEARLQSLRNIHTLLDAAMLQINQYLTVLASLGPPR. A disordered region spans residues 530–612; that stretch reads PATSVNPTEE…LQKLESPVAH (83 aa). Positions 539–559 are enriched in low complexity; that stretch reads ETASTVVSAAPSTSAPSSEAP. Residues 560-570 show a composition bias toward pro residues; that stretch reads TPSPGASPPIP. Residues 586 to 595 show a composition bias toward acidic residues; that stretch reads ELPEDGEPDA. Position 608 is a phosphoserine (Ser-608).

It belongs to the HRD1 family. As to quaternary structure, homodimer. Interacts with p53/TP53. Interacts with HTT. Component of the HRD1 complex, which comprises at least SYNV1/HRD1, DERL1/2, FAM8A1, HERPUD1/HERP, OS9, SEL1L and UBE2J1. FAM8A1 is stabilized by interaction with SYNV1, which prevents its proteasomal degradation. OS9 and UBE2J1 recruitment to the complex may be mediated by SEL1L. SYNV1 assembles with SEL1L and FAM8A1 through its transmembrane domains, but interaction with its cytoplasmic domain is required to confer stability to FAM8A1 and enhance recruitment of HERPUD1. The HRD1 complex also associates with VIMP and may transfer misfolded proteins from the endoplasmic reticulum to VCP. May form a complex with ERLEC1; HSPA5; OS9 and SEL1L. Interacts with VCP. Interacts with UBXN6. Interacts with BAG6. Interacts with NFE2L1. Interacts (via N-terminus) with components of the pre-B cell receptor, including IGLL1 and VPREB1A. Interacts with CREB3L3; this interaction leads to CREB3L3 ubiquitination and proteasomal degradation. Post-translationally, auto-ubiquitinated. Deubiquitinated by USP19. As to expression, widely expressed, with highest levels in bone, spleen, lung and testis. In the brain, present in neurons but not in glial cells. Up-regulated in synovial tissues from mice with collagen-induced arthritis (at protein level). Expressed in the liver.

It is found in the endoplasmic reticulum membrane. The catalysed reaction is S-ubiquitinyl-[E2 ubiquitin-conjugating enzyme]-L-cysteine + [acceptor protein]-L-lysine = [E2 ubiquitin-conjugating enzyme]-L-cysteine + N(6)-ubiquitinyl-[acceptor protein]-L-lysine.. It participates in protein modification; protein ubiquitination. Functionally, E3 ubiquitin-protein ligase which accepts ubiquitin specifically from endoplasmic reticulum-associated UBC7 E2 ligase and transfers it to substrates, promoting their degradation. Component of the endoplasmic reticulum quality control (ERQC) system also called ER-associated degradation (ERAD) involved in ubiquitin-dependent degradation of misfolded endoplasmic reticulum proteins. Also promotes the degradation of normal but naturally short-lived proteins such as SGK. Protects cells from ER stress-induced apoptosis. Sequesters p53/TP53 in the cytoplasm and promotes its degradation, thereby negatively regulating its biological function in transcription, cell cycle regulation and apoptosis. Required for embryogenesis. Mediates the ubiquitination and subsequent degradation of cytoplasmic NFE2L1. During the early stage of B cell development, required for degradation of the pre-B cell receptor (pre-BCR) complex, hence supporting further differentiation into mature B cells. This chain is E3 ubiquitin-protein ligase synoviolin (Syvn1), found in Mus musculus (Mouse).